The sequence spans 443 residues: Ribosomal protein uS12 methylthiotransferase RimO (443 aa).

Residues 5 to 116 form the MTTase N-terminal domain; sequence PSVAVAHLGC…IVDVIQRAEA (112 aa). C14, C50, C79, C154, C158, and C161 together coordinate [4Fe-4S] cluster. A Radical SAM core domain is found at 140 to 370; that stretch reads TTTEGTAYVR…ALQQPISWQQ (231 aa). In terms of domain architecture, TRAM spans 372 to 442; sequence QQEVGKTVQV…AYDLQGQLVS (71 aa).

This sequence belongs to the methylthiotransferase family. RimO subfamily. Requires [4Fe-4S] cluster as cofactor.

The protein resides in the cytoplasm. The enzyme catalyses L-aspartate(89)-[ribosomal protein uS12]-hydrogen + (sulfur carrier)-SH + AH2 + 2 S-adenosyl-L-methionine = 3-methylsulfanyl-L-aspartate(89)-[ribosomal protein uS12]-hydrogen + (sulfur carrier)-H + 5'-deoxyadenosine + L-methionine + A + S-adenosyl-L-homocysteine + 2 H(+). In terms of biological role, catalyzes the methylthiolation of an aspartic acid residue of ribosomal protein uS12. The polypeptide is Ribosomal protein uS12 methylthiotransferase RimO (Acaryochloris marina (strain MBIC 11017)).